Consider the following 242-residue polypeptide: MAETNSPRYSRILLKLSGEALSGNKDMGIDAQVLDQMSLSIAHLVGLGVQVGIVVGGGNLYRGSQLQKDGLVGRVTGDQMGMLATVMNGLAMRDALVRRNIKTRLMSALSIGTVVEPYSSRDAIRYLSQGEVCVFVAGTGNPFFTTDTAACLRGIEIEANLILKATKVDGVYNKDPSKYDDAVKYDNLTFDQVLDEKLGVMDLTAICLCRDHNVPLQVFDMNKPGALLSVIMGEKEGTHVTK.

ATP is bound at residue 15–18 (KLSG). Gly57 contacts UMP. The ATP site is built by Gly58 and Arg62. Residues Asp78 and 139–146 (TGNPFFTT) each bind UMP. 3 residues coordinate ATP: Thr166, Tyr172, and Asp175.

The protein belongs to the UMP kinase family. Homohexamer.

It is found in the cytoplasm. It carries out the reaction UMP + ATP = UDP + ADP. The protein operates within pyrimidine metabolism; CTP biosynthesis via de novo pathway; UDP from UMP (UMPK route): step 1/1. Inhibited by UTP. Functionally, catalyzes the reversible phosphorylation of UMP to UDP. This is Uridylate kinase from Acinetobacter baylyi (strain ATCC 33305 / BD413 / ADP1).